The sequence spans 264 residues: Apolipoprotein A-I (264 aa).

An N-terminal signal peptide occupies residues 1 to 18 (MKTVVLAVAVLFLTGSQA). 2 consecutive repeat copies span residues 67–88 (LNLL…EQLG) and 89–110 (PVTQ…REMN). A 10 X approximate tandem repeats region spans residues 67-264 (LNLLENWDTL…EEASKKLNAQ (198 aa)). Residue methionine 109 is modified to Methionine sulfoxide. Residues 111–121 (KDLEEVKAKVQ) form a 3; half-length repeat. 5 tandem repeats follow at residues 122 to 143 (PYLD…QKME), 144 to 165 (PLGA…EKLT), 166 to 187 (PLGE…TKMT), 188 to 207 (PYSD…LKDS), and 208 to 229 (PTLA…EKAK). Methionine 193 carries the post-translational modification Methionine sulfoxide. The 9; half-length repeat unit spans residues 230 to 240 (PALEDLRQGLM). Methionine 240 carries the methionine sulfoxide modification. Copy 10 of the repeat occupies 241 to 264 (PVFESFKTRIMSMVEEASKKLNAQ).

This sequence belongs to the apolipoprotein A1/A4/E family. As to quaternary structure, homodimer. Interacts with APOA1BP and CLU. Component of a sperm activating protein complex (SPAP), consisting of APOA1, an immunoglobulin heavy chain, an immunoglobulin light chain and albumin. Interacts with NDRG1. Interacts with SCGB3A2. Interacts with NAXE and YJEFN3. Post-translationally, glycosylated. In terms of processing, palmitoylated. Phosphorylation sites are present in the extracellular medium. In terms of tissue distribution, major protein of plasma HDL, also found in chylomicrons.

Its subcellular location is the secreted. In terms of biological role, participates in the reverse transport of cholesterol from tissues to the liver for excretion by promoting cholesterol efflux from tissues and by acting as a cofactor for the lecithin cholesterol acyltransferase (LCAT). As part of the SPAP complex, activates spermatozoa motility. The polypeptide is Apolipoprotein A-I (APOAI) (Mesocricetus auratus (Golden hamster)).